The sequence spans 559 residues: Glucose-6-phosphate isomerase (559 aa).

Glu-363 (proton donor) is an active-site residue. Active-site residues include His-394 and Lys-523.

Belongs to the GPI family.

Its subcellular location is the cytoplasm. It catalyses the reaction alpha-D-glucose 6-phosphate = beta-D-fructose 6-phosphate. Its pathway is carbohydrate biosynthesis; gluconeogenesis. The protein operates within carbohydrate degradation; glycolysis; D-glyceraldehyde 3-phosphate and glycerone phosphate from D-glucose: step 2/4. Its function is as follows. Catalyzes the reversible isomerization of glucose-6-phosphate to fructose-6-phosphate. This Bartonella quintana (strain Toulouse) (Rochalimaea quintana) protein is Glucose-6-phosphate isomerase.